The primary structure comprises 115 residues: Large ribosomal subunit protein bL19 (115 aa).

This sequence belongs to the bacterial ribosomal protein bL19 family.

In terms of biological role, this protein is located at the 30S-50S ribosomal subunit interface and may play a role in the structure and function of the aminoacyl-tRNA binding site. In Fervidobacterium nodosum (strain ATCC 35602 / DSM 5306 / Rt17-B1), this protein is Large ribosomal subunit protein bL19.